A 1923-amino-acid chain; its full sequence is Callose synthase 5 (1923 aa).

The span at 1-10 (MAQSSTSHDS) shows a compositional bias: polar residues. Residues 1-22 (MAQSSTSHDSGPQGLMRRPSRS) form a disordered region. The Cytoplasmic portion of the chain corresponds to 1-481 (MAQSSTSHDS…ETRTFWHIYH (481 aa)). A helical transmembrane segment spans residues 482 to 502 (SFDRLWTFYLLALQAMIILAF). Topologically, residues 503–521 (ERVELREILRKDVLYALSS) are extracellular. The helical transmembrane segment at 522–542 (IFITAAFLRFLQSVLDVILNF) threads the bilayer. The Cytoplasmic segment spans residues 543-559 (PGFHRWKFTDVLRNILK). Residues 560–580 (IVVSLAWCVVLPLCYAQSVSF) traverse the membrane as a helical segment. Residues 581–601 (APGKLKQWLSFLPQVKGVPPL) lie on the Extracellular side of the membrane. A helical transmembrane segment spans residues 602–622 (YIMAVALYLLPNVLAAIMFIF). Over 623–658 (PMLRRWIENSDWHIFRLLLWWSQPRIYVGRGMHESQ) the chain is Cytoplasmic. The chain crosses the membrane as a helical span at residues 659–679 (IALIKYTIFWLLLFCCKFAFS). Residues 680–719 (YFLQVKLLVKPTNAIMSIRHVKYKWHEFFPNAEHNYGAVV) are Extracellular-facing. The helical transmembrane segment at 720–740 (SLWLPVILVYFMDTQIWYAIF) threads the bilayer. Over 741–1486 (STICGGVIGA…FDFFRMMSCY (746 aa)) the chain is Cytoplasmic. A helical membrane pass occupies residues 1487 to 1507 (FTTVGFYISSMIVVLTVYAFL). Topologically, residues 1508-1535 (YGRLYLSLSGVEEAIVKFAAAKGDSSLK) are extracellular. A helical transmembrane segment spans residues 1536-1556 (AAMASQSVVQLGLLMTLPMVM). The Cytoplasmic portion of the chain corresponds to 1557–1566 (EIGLERGFRT). Residues 1567–1587 (ALSDLIIMQLQLAPVFFTFSL) traverse the membrane as a helical segment. Residues 1588–1630 (GTKVHYYGRTILHGGSKYRATGRGFVVKHEKFAENYRMYSRSH) are Extracellular-facing. A helical transmembrane segment spans residues 1631–1651 (FVKGMELMVLLICYRIYGKAA). At 1652-1657 (EDSVGY) the chain is on the cytoplasmic side. Residues 1658–1678 (ALVMGSTWFLVGSWLFAPFFF) form a helical membrane-spanning segment. At 1679–1732 (NPSGFEWQKIVDDWDDWNKWISSRGGIGVPANKSWESWWEEEQEHLLHSGFFGK) the chain is on the extracellular side. Residue asparagine 1710 is glycosylated (N-linked (GlcNAc...) asparagine). Residues 1733–1755 (FWEIFLSLRYFIYQYGIVYQLNL) traverse the membrane as a helical segment. Topologically, residues 1756–1766 (TKESRMGKQHS) are cytoplasmic. Residues 1767-1787 (IIVYGLSWLVIVAVMIVLKIV) traverse the membrane as a helical segment. Topologically, residues 1788-1803 (SMGRKKFSADFQLMFR) are extracellular. A helical transmembrane segment spans residues 1804–1824 (LLKLFLFIGSVVIVGMLFHFL). Residue lysine 1825 is a topological domain, cytoplasmic. The helical transmembrane segment at 1826 to 1846 (LTVGDIMQSLLAFLPTGWALL) threads the bilayer. Topologically, residues 1847–1873 (QISQVARPLMKTVGMWGSVKALARGYE) are extracellular. The helical transmembrane segment at 1874–1894 (YIMGVVIFMPVTVLAWFPFVS) threads the bilayer. The Cytoplasmic segment spans residues 1895–1923 (EFQTRLLFNQAFSRGLQIQRILAGGKKQK).

Belongs to the glycosyltransferase 48 family.

The protein resides in the cell membrane. The enzyme catalyses [(1-&gt;3)-beta-D-glucosyl](n) + UDP-alpha-D-glucose = [(1-&gt;3)-beta-D-glucosyl](n+1) + UDP + H(+). Functionally, required for the formation of the callose wall separating the tetraspores (interstitial wall) and surrounding the pollen mother cells (peripheral wall). Required for exine formation on pollen wall. May be involved in callose synthesis during pollen tube growth. During plant growth and development, callose is found as a transitory component of the cell plate in dividing cells, is a major component of pollen mother cell walls and pollen tubes, and is found as a structural component of plasmodesmatal canals. This Arabidopsis thaliana (Mouse-ear cress) protein is Callose synthase 5 (CALS5).